Consider the following 793-residue polypeptide: Protein translocase subunit SecA 2 (793 aa).

Residues Q77, 95–99, and D493 each bind ATP; that span reads GEGKT.

The protein belongs to the SecA family. In terms of assembly, monomer and homodimer. Part of the essential Sec protein translocation apparatus which comprises SecA, SecYEG and auxiliary proteins SecDF. Other proteins may also be involved.

The protein resides in the cell membrane. It localises to the cytoplasm. It carries out the reaction ATP + H2O + cellular proteinSide 1 = ADP + phosphate + cellular proteinSide 2.. Part of the Sec protein translocase complex. Interacts with the SecYEG preprotein conducting channel. Has a central role in coupling the hydrolysis of ATP to the transfer of proteins into and across the cell membrane, serving as an ATP-driven molecular motor driving the stepwise translocation of polypeptide chains across the membrane. The polypeptide is Protein translocase subunit SecA 2 (Streptococcus sanguinis (strain SK36)).